A 604-amino-acid polypeptide reads, in one-letter code: MVVQEDNPNTGDVQEKTETAPVAEPSKIFTVEILHMIKDAQQQHGLRHGDFQRYRGYCSRRIRRLRKALKYPQGDKRHFKRRDVTIGQLTGKKADERFIHIPLICAERAWAYAMQLKQESNTEPRKRFHLVNKLRRACFYALQLQELCNTEAFDARTKLECEAYVAWMHGTLHFELQLWKTAGEHLKRAQVVYENLGKALPEDEQELYRAKVNEFTPNLRYCAYNISGGASGGKIDEILELRAQGVLENLDVLVSQTKTESSEGLQTIDWRGRKVTVRPEKVRLFLLSAQELDKSLAKTTKQDAKIELIERILMDCKDAIQAVRDEIKQDPKLRSLTTGQTVSGVQYLLAYLSYIRHSRTLQRNLCLVEQAKLNFYDPNLQSQQNVGDGKRVRPQDLARLYEIILQNVTEMQQINGLEDDATYQSEVENLAITFKAFRCYYIALTLIDIKKWKEAVALYERASNYATEALKGKSSPEFQLQEELKKVVSAIDGCKFSAHAYSVLEDDNSEESGTTTKSQKTTKPLYERLSLYKEDQSLHTKAPNVFKLTPDMEPIPCKPIFFDLAMTYVELPSLEGKLESPGKKGASITGFVKGFLGWGGGGNK.

Over residues 1-12 the composition is skewed to polar residues; that stretch reads MVVQEDNPNTGD. Positions 1-21 are disordered; it reads MVVQEDNPNTGDVQEKTETAP.

The protein belongs to the SRP68 family. Heterodimer with Srp72. Srp68/Srp72 heterodimer formation is stabilized by the presence of 7SL RNA. Component of a signal recognition particle (SRP) complex that consists of a 7SL RNA molecule of 300 nucleotides and six protein subunits: Srp72, Srp68, Srp54, Srp19, Srp14 and Srp9.

The protein localises to the cytoplasm. It localises to the nucleus. The protein resides in the nucleolus. Its subcellular location is the endoplasmic reticulum. In terms of biological role, component of the signal recognition particle (SRP) complex, a ribonucleoprotein complex that mediates the cotranslational targeting of secretory and membrane proteins to the endoplasmic reticulum (ER). The SRP complex interacts with the signal sequence in nascent secretory and membrane proteins and directs them to the membrane of the ER. The SRP complex targets the ribosome-nascent chain complex to the SRP receptor (SR), which is anchored in the ER, where SR compaction and GTPase rearrangement drive cotranslational protein translocation into the ER. Binds the signal recognition particle RNA (7SL RNA), Srp72 binds to this complex subsequently. The SRP complex possibly participates in the elongation arrest function. The protein is Signal recognition particle subunit SRP68 (Srp68) of Drosophila melanogaster (Fruit fly).